Here is a 73-residue protein sequence, read N- to C-terminus: MAFLKKSLFLVLFLGLVSLSICDEEKRQDEDDDDDDDEEKRGVFDIIKGAGKQLIAHAMGKIAEKVGLNKDGN.

The first 22 residues, 1 to 22 (MAFLKKSLFLVLFLGLVSLSIC), serve as a signal peptide directing secretion. A propeptide spanning residues 23–39 (DEEKRQDEDDDDDDDEE) is cleaved from the precursor.

As to expression, expressed by the skin glands.

The protein resides in the secreted. Has antibacterial activity against Gram-negative bacteria E.coli ATCC 25922 (MIC=60 uM) and S.choleraesuis ATCC 14028 (MIC=240 uM) and against Gram-positive bacterium S.aureus ATCC 29313 (MIC=240 uM). Shows no hemolytic activity and no cytotoxicity. This is Ocellatin-PT7 from Leptodactylus pustulatus (Ceara white-lipped frog).